Consider the following 409-residue polypeptide: MKGIIFVIDGMGDRPVKELGDKTPLENARTPAMDKMVEEGITGIMDTIRPGVRPGSDTAHLTLLGYDPYEVYTGRGPFEAAGINVEVKPGDIAFRCNFSTADENLIITDRRAGRIQSGTDKLAEVINNEVKLDDVEVIFKESDGHRGVLVLRGNGLSDKITDADPKHEGNKPKTVKPLDDSEEAKFTADIVNKFVEQSYELLKDHPVNIERIENGENPANIILPRGVGAVPHVTPFEELYGLKGVCVAETGLIKGIAKIAGMDTIDIPGATGGIDTDIDSVHKYIVDTIKSNKYDFILVNVDGADEAGHDGDIFGKRDFIEKVDNIMADLKDMDDIVLFVTADHSTPVSVKDHSGDPVPVFIKAPGLRVDDVKEYGERAAAKGGLCRIRGTDVLYIIRDLMNVTQKFGA.

Residues 160–179 (ITDADPKHEGNKPKTVKPLD) are disordered.

Belongs to the BPG-independent phosphoglycerate mutase family. A-PGAM subfamily.

The catalysed reaction is (2R)-2-phosphoglycerate = (2R)-3-phosphoglycerate. It participates in carbohydrate degradation; glycolysis; pyruvate from D-glyceraldehyde 3-phosphate: step 3/5. Functionally, catalyzes the interconversion of 2-phosphoglycerate and 3-phosphoglycerate. The chain is 2,3-bisphosphoglycerate-independent phosphoglycerate mutase from Methanosphaera stadtmanae (strain ATCC 43021 / DSM 3091 / JCM 11832 / MCB-3).